The following is a 289-amino-acid chain: Energy-coupling factor transporter ATP-binding protein EcfA2 (289 aa).

The ABC transporter domain occupies 3 to 246; it reads IEIKDVEHRY…KDDIAALGLD (244 aa). 40–47 contributes to the ATP binding site; that stretch reads GHTGSGKS.

This sequence belongs to the ABC transporter superfamily. Energy-coupling factor EcfA family. Forms a stable energy-coupling factor (ECF) transporter complex composed of 2 membrane-embedded substrate-binding proteins (S component), 2 ATP-binding proteins (A component) and 2 transmembrane proteins (T component).

The protein resides in the cell membrane. Its function is as follows. ATP-binding (A) component of a common energy-coupling factor (ECF) ABC-transporter complex. Unlike classic ABC transporters this ECF transporter provides the energy necessary to transport a number of different substrates. The protein is Energy-coupling factor transporter ATP-binding protein EcfA2 of Bacillus licheniformis (strain ATCC 14580 / DSM 13 / JCM 2505 / CCUG 7422 / NBRC 12200 / NCIMB 9375 / NCTC 10341 / NRRL NRS-1264 / Gibson 46).